A 297-amino-acid chain; its full sequence is Homoserine kinase (297 aa).

82-92 (PVSRGLGSSAA) contacts ATP.

The protein belongs to the GHMP kinase family. Homoserine kinase subfamily.

Its subcellular location is the cytoplasm. It catalyses the reaction L-homoserine + ATP = O-phospho-L-homoserine + ADP + H(+). Its pathway is amino-acid biosynthesis; L-threonine biosynthesis; L-threonine from L-aspartate: step 4/5. In terms of biological role, catalyzes the ATP-dependent phosphorylation of L-homoserine to L-homoserine phosphate. This Clostridium botulinum (strain Okra / Type B1) protein is Homoserine kinase.